A 201-amino-acid chain; its full sequence is Large ribosomal subunit protein eL15B (201 aa).

The tract at residues 161–182 (SRGLTSIGKKSRGIGKGHRYNN) is disordered. Residues 169–179 (KKSRGIGKGHR) show a composition bias toward basic residues. Ser183 carries the phosphoserine modification.

Belongs to the eukaryotic ribosomal protein eL15 family. In terms of assembly, component of the large ribosomal subunit (LSU). Mature yeast ribosomes consist of a small (40S) and a large (60S) subunit. The 40S small subunit contains 1 molecule of ribosomal RNA (18S rRNA) and at least 33 different proteins. The large 60S subunit contains 3 rRNA molecules (25S, 5.8S and 5S rRNA) and at least 46 different proteins.

It localises to the cytoplasm. The protein localises to the nucleus. The protein resides in the nucleolus. Functionally, component of the ribosome, a large ribonucleoprotein complex responsible for the synthesis of proteins in the cell. The small ribosomal subunit (SSU) binds messenger RNAs (mRNAs) and translates the encoded message by selecting cognate aminoacyl-transfer RNA (tRNA) molecules. The large subunit (LSU) contains the ribosomal catalytic site termed the peptidyl transferase center (PTC), which catalyzes the formation of peptide bonds, thereby polymerizing the amino acids delivered by tRNAs into a polypeptide chain. The nascent polypeptides leave the ribosome through a tunnel in the LSU and interact with protein factors that function in enzymatic processing, targeting, and the membrane insertion of nascent chains at the exit of the ribosomal tunnel. This Schizosaccharomyces pombe (strain 972 / ATCC 24843) (Fission yeast) protein is Large ribosomal subunit protein eL15B (rpl1502).